We begin with the raw amino-acid sequence, 706 residues long: MSPFLRIGLSNFDCGSCQSCQGEAVNPYCAVLVKEYVESENGQMYIQKKPTMYPPWDSTFDAHINKGRVMQIIVKGKNVDLISETTVELYSLAERCRKNNGKTEIWLELKPQGRMLMNARYFLEMSDTKDMNEFETEGFFALHQRRGAIKQAKVHHVKCHEFTATFFPQPTFCSVCHEFVWGLNKQGYQCRQCNAAIHKKCIDKVIAKCTGSAINSRETMFHKERFKIDMPHRFKVYNYKSPTFCEHCGTLLWGLARQGLKCDACGMNVHHRCQTKVANLCGINQKLMAEALAMIESTQQARCLRDTEQIFREGPVEIGLPCSIKNEARPPCLPTPGKREPQGISWESPLDEVDKMCHLPEPELNKERPSLQIKLKIEDFILHKMLGKGSFGKVFLAEFKKTNQFFAIKALKKDVVLMDDDVECTMVEKRVLSLAWEHPFLTHMFCTFQTKENLFFVMEYLNGGDLMYHIQSCHKFDLSRATFYAAEIILGLQFLHSKGIVYRDLKLDNILLDKDGHIKIADFGMCKENMLGDAKTNTFCGTPDYIAPEILLGQKYNHSVDWWSFGVLLYEMLIGQSPFHGQDEEELFHSIRMDNPFYPRWLEKEAKDLLVKLFVREPEKRLGVRGDIRQHPLFREINWEELERKEIDPPFRPKVKSPFDCSNFDKEFLNEKPRLSFADRALINSMDQNMFRNFSFMNPGMERLIS.

In terms of domain architecture, C2 spans 1–107 (MSPFLRIGLS…KNNGKTEIWL (107 aa)). Y90 carries the phosphotyrosine; by LCK modification. The Phorbol-ester/DAG-type 1 zinc finger occupies 159-209 (CHEFTATFFPQPTFCSVCHEFVWGLNKQGYQCRQCNAAIHKKCIDKVIAKC). T219 carries the phosphothreonine; by autocatalysis modification. The segment at 231–281 (PHRFKVYNYKSPTFCEHCGTLLWGLARQGLKCDACGMNVHHRCQTKVANLC) adopts a Phorbol-ester/DAG-type 2 zinc-finger fold. S348 bears the Phosphoserine mark. Residues 380–634 (FILHKMLGKG…RGDIRQHPLF (255 aa)) form the Protein kinase domain. Residues 386 to 394 (LGKGSFGKV) and K409 contribute to the ATP site. The active-site Proton acceptor is D504. T538 is subject to Phosphothreonine; by PDPK1. The 72-residue stretch at 635-706 (REINWEELER…MNPGMERLIS (72 aa)) folds into the AGC-kinase C-terminal domain. A phosphoserine mark is found at S676, S685, and S695.

This sequence belongs to the protein kinase superfamily. AGC Ser/Thr protein kinase family. PKC subfamily. In terms of assembly, part of a lipid raft complex composed at least of BCL10, CARD11, MALT1 and IKBKB. Interacts with GLRX3 (via N-terminus). Interacts with ECT2. Interacts with CCDC88A/GIV; the interaction leads to phosphorylation of CCDC88A and inhibition of its guanine nucleotide exchange factor activity. Interacts with PRKCH upstream open reading frame 2; the interaction leads to inhibition of kinase activity. Interacts with CD28. The cofactor is Mg(2+). In terms of processing, autophosphorylation at Thr-219 is required for targeting to the TCR and cellular function of PRKCQ upon antigen receptor ligation. Following TCR stimulation, phosphorylated at Tyr-90 and Ser-685. Expressed in skeletal muscle, T-cells, megakaryoblastic cells and platelets.

It is found in the cytoplasm. It localises to the cell membrane. It carries out the reaction L-seryl-[protein] + ATP = O-phospho-L-seryl-[protein] + ADP + H(+). The enzyme catalyses L-threonyl-[protein] + ATP = O-phospho-L-threonyl-[protein] + ADP + H(+). Novel PKCs (PRKCD, PRKCE, PRKCH and PRKCQ) are calcium-insensitive, but activated by diacylglycerol (DAG) and phosphatidylserine. Three specific sites; Thr-538 (activation loop of the kinase domain), Ser-676 (turn motif) and Ser-695 (hydrophobic region), need to be phosphorylated for its full activation. Inhibited by PRKCH upstream open reading frame 2. Calcium-independent, phospholipid- and diacylglycerol (DAG)-dependent serine/threonine-protein kinase that mediates non-redundant functions in T-cell receptor (TCR) signaling, including T-cells activation, proliferation, differentiation and survival, by mediating activation of multiple transcription factors such as NF-kappa-B, JUN, NFATC1 and NFATC2. In TCR-CD3/CD28-co-stimulated T-cells, is required for the activation of NF-kappa-B and JUN, which in turn are essential for IL2 production, and participates in the calcium-dependent NFATC1 and NFATC2 transactivation. Mediates the activation of the canonical NF-kappa-B pathway (NFKB1) by direct phosphorylation of CARD11 on several serine residues, inducing CARD11 association with lipid rafts and recruitment of the BCL10-MALT1 complex, which then activates IKK complex, resulting in nuclear translocation and activation of NFKB1. May also play an indirect role in activation of the non-canonical NF-kappa-B (NFKB2) pathway. In the signaling pathway leading to JUN activation, acts by phosphorylating the mediator STK39/SPAK and may not act through MAP kinases signaling. Plays a critical role in TCR/CD28-induced NFATC1 and NFATC2 transactivation by participating in the regulation of reduced inositol 1,4,5-trisphosphate generation and intracellular calcium mobilization. After costimulation of T-cells through CD28 can phosphorylate CBLB and is required for the ubiquitination and subsequent degradation of CBLB, which is a prerequisite for the activation of TCR. During T-cells differentiation, plays an important role in the development of T-helper 2 (Th2) cells following immune and inflammatory responses, and, in the development of inflammatory autoimmune diseases, is necessary for the activation of IL17-producing Th17 cells. May play a minor role in Th1 response. Upon TCR stimulation, mediates T-cell protective survival signal by phosphorylating BAD, thus protecting T-cells from BAD-induced apoptosis, and by up-regulating BCL-X(L)/BCL2L1 levels through NF-kappa-B and JUN pathways. In platelets, regulates signal transduction downstream of the ITGA2B, CD36/GP4, F2R/PAR1 and F2RL3/PAR4 receptors, playing a positive role in 'outside-in' signaling and granule secretion signal transduction. May relay signals from the activated ITGA2B receptor by regulating the uncoupling of WASP and WIPF1, thereby permitting the regulation of actin filament nucleation and branching activity of the Arp2/3 complex. May mediate inhibitory effects of free fatty acids on insulin signaling by phosphorylating IRS1, which in turn blocks IRS1 tyrosine phosphorylation and downstream activation of the PI3K/AKT pathway. Phosphorylates MSN (moesin) in the presence of phosphatidylglycerol or phosphatidylinositol. Phosphorylates PDPK1 at 'Ser-504' and 'Ser-532' and negatively regulates its ability to phosphorylate PKB/AKT1. Phosphorylates CCDC88A/GIV and inhibits its guanine nucleotide exchange factor activity. Phosphorylates and activates LRRK1, which phosphorylates RAB proteins involved in intracellular trafficking. The protein is Protein kinase C theta type (PRKCQ) of Homo sapiens (Human).